Here is a 118-residue protein sequence, read N- to C-terminus: Ribonuclease P protein component (118 aa).

Belongs to the RnpA family. As to quaternary structure, consists of a catalytic RNA component (M1 or rnpB) and a protein subunit.

The catalysed reaction is Endonucleolytic cleavage of RNA, removing 5'-extranucleotides from tRNA precursor.. Its function is as follows. RNaseP catalyzes the removal of the 5'-leader sequence from pre-tRNA to produce the mature 5'-terminus. It can also cleave other RNA substrates such as 4.5S RNA. The protein component plays an auxiliary but essential role in vivo by binding to the 5'-leader sequence and broadening the substrate specificity of the ribozyme. The chain is Ribonuclease P protein component from Mycoplasma pneumoniae (strain ATCC 29342 / M129 / Subtype 1) (Mycoplasmoides pneumoniae).